A 135-amino-acid chain; its full sequence is Ribonuclease VapC26 (135 aa).

The PINc domain maps to 1–118; sequence MIIDTSALLA…TRTILTLDRR (118 aa). Mg(2+) is bound by residues aspartate 4 and aspartate 97.

It belongs to the PINc/VapC protein family. The cofactor is Mg(2+).

In terms of biological role, toxic component of a type II toxin-antitoxin (TA) system. An RNase. Upon expression in M.smegmatis inhibits colony formation. Its toxic effect is neutralized by coexpression with cognate antitoxin VapB26. In Mycobacterium tuberculosis (strain ATCC 25618 / H37Rv), this protein is Ribonuclease VapC26.